Here is a 426-residue protein sequence, read N- to C-terminus: Serine/threonine-protein kinase ssn3 (426 aa).

In terms of domain architecture, Protein kinase spans 41-368; that stretch reads YHIVGFISSG…AREALEHPYF (328 aa). Residues 47-55 and Lys-71 each bind ATP; that span reads ISSGTYGRV. Asp-173 (proton acceptor) is an active-site residue. A disordered region spans residues 390 to 426; sequence RVTQDDNDIRSGSLPGTKRSGLPDDSLMGRAAKRLKE.

The protein belongs to the protein kinase superfamily. CMGC Ser/Thr protein kinase family. CDC2/CDKX subfamily. In terms of assembly, component of the srb8-11 complex, a regulatory module of the Mediator complex. Mg(2+) is required as a cofactor.

It is found in the nucleus. The catalysed reaction is L-seryl-[protein] + ATP = O-phospho-L-seryl-[protein] + ADP + H(+). The enzyme catalyses L-threonyl-[protein] + ATP = O-phospho-L-threonyl-[protein] + ADP + H(+). It carries out the reaction [DNA-directed RNA polymerase] + ATP = phospho-[DNA-directed RNA polymerase] + ADP + H(+). In terms of biological role, component of the srb8-11 complex. The srb8-11 complex is a regulatory module of the Mediator complex which is itself dependent transcription. The srb8-11 complex may be involved in the transcriptional repression of a subset of genes regulated by Mediator. It may inhibit the association of the Mediator complex with RNA polymerase II to form the holoenzyme complex. The srb8-11 complex phosphorylates the C-terminal domain (CTD) of the largest subunit of RNA polymerase II. The protein is Serine/threonine-protein kinase ssn3 (ssn3) of Neosartorya fischeri (strain ATCC 1020 / DSM 3700 / CBS 544.65 / FGSC A1164 / JCM 1740 / NRRL 181 / WB 181) (Aspergillus fischerianus).